The chain runs to 833 residues: Leucine--tRNA ligase (833 aa).

The short motif at 41 to 52 (PYPSGAGLHVGH) is the 'HIGH' region element. A 'KMSKS' region motif is present at residues 610 to 614 (KMSKS). Lys-613 lines the ATP pocket.

This sequence belongs to the class-I aminoacyl-tRNA synthetase family.

The protein localises to the cytoplasm. It carries out the reaction tRNA(Leu) + L-leucine + ATP = L-leucyl-tRNA(Leu) + AMP + diphosphate. The chain is Leucine--tRNA ligase from Streptococcus suis (strain 98HAH33).